We begin with the raw amino-acid sequence, 555 residues long: MKSDIEIARETDLRKIKEVATTLGIPREEVQNYGRYIAKVPIHLIDKKQMDQHNLILVTAITPTKAGIGKTTVSIGLALGLNKIGKKAVVALREPSLGPCFGMKGGAAGGGYAQVLPMENINLHFTGDFHAVTSAHNMITALLDNYIYQTRNTCEGLKEIKWKRVLDVNDRSLRNIVSGLGGSANGVPTETGFDITPASEIMAILCLATDIEDLKRRVGNILLGYTNEDKPFTVNDLGIAGAITVLLKDALLPNLVQTTENTPAFVHGGPFANIAHGCNSISATQMALTYGDYVITEAGFGADLGAEKFFNIKCRKAGLSPKLTVIVATAQSLKLHGGVPEKEIKEPNIEGLKNGFANLDKHIENMKSFGQQVIVTFNRFATDTDEEIALVAEHCEEKGVGFAMNNVFAEGGEGGTELARLVVDTIENHPSAPLQYTYDLNDPIRTKVQKVAQKIYGASSIVYTTLADKKLRQIESLGISHYPICIAKTQYSFSSDPKAYGVAKDFELKVRDVIINNGAEMIVVVMGEIMRMPGLPKEPQARKIDIVDGMIEGLS.

Position 64 to 71 (64 to 71 (TKAGIGKT)) interacts with ATP.

This sequence belongs to the formate--tetrahydrofolate ligase family.

The catalysed reaction is (6S)-5,6,7,8-tetrahydrofolate + formate + ATP = (6R)-10-formyltetrahydrofolate + ADP + phosphate. The protein operates within one-carbon metabolism; tetrahydrofolate interconversion. The polypeptide is Formate--tetrahydrofolate ligase (Parabacteroides distasonis (strain ATCC 8503 / DSM 20701 / CIP 104284 / JCM 5825 / NCTC 11152)).